The primary structure comprises 560 residues: Cytosolic purine 5'-nucleotidase (560 aa).

The Nucleophile role is filled by aspartate 52. IMP-binding residues include aspartate 52 and aspartate 54. Mg(2+) contacts are provided by aspartate 52 and aspartate 54. The active-site Proton donor is the aspartate 54. ATP-binding residues include arginine 144 and asparagine 154. 7 residues coordinate IMP: arginine 202, aspartate 206, lysine 215, threonine 249, asparagine 250, serine 251, and lysine 292. Aspartate 351 contacts Mg(2+). At serine 418 the chain carries Phosphoserine. Positions 453 and 456 each coordinate ATP. Phosphoserine occurs at positions 502, 511, and 527. A disordered region spans residues 541–560; that stretch reads PQEITHCHDEDDDEEEEEEE. The required for tetramer assembly stretch occupies residues 548–560; sequence HDEDDDEEEEEEE. The span at 550 to 560 shows a compositional bias: acidic residues; sequence EDDDEEEEEEE.

Belongs to the 5'(3')-deoxyribonucleotidase family. Homotetramer. The cofactor is Mg(2+).

Its subcellular location is the cytoplasm. The protein resides in the cytosol. It catalyses the reaction a ribonucleoside 5'-phosphate + H2O = a ribonucleoside + phosphate. The enzyme catalyses a 2'-deoxyribonucleoside + a ribonucleoside 5'-phosphate = a ribonucleoside + a 2'-deoxyribonucleoside 5'-phosphate. It carries out the reaction IMP + H2O = inosine + phosphate. The catalysed reaction is GMP + H2O = guanosine + phosphate. It catalyses the reaction dIMP + H2O = 2'-deoxyinosine + phosphate. The enzyme catalyses dGMP + H2O = 2'-deoxyguanosine + phosphate. It carries out the reaction XMP + H2O = xanthosine + phosphate. The catalysed reaction is inosine + GMP = guanosine + IMP. It catalyses the reaction dGMP + inosine = 2'-deoxyguanosine + IMP. The enzyme catalyses dIMP + inosine = 2'-deoxyinosine + IMP. It carries out the reaction inosine + UMP = uridine + IMP. The catalysed reaction is inosine + CMP = cytidine + IMP. It catalyses the reaction inosine + AMP = IMP + adenosine. Allosterically activated by various compounds including ATP, 2,3-BPG/2,3-Bisphosphoglyceric acid and Ap4A/P1,P4-bis(5'-adenosyl) tetraphosphate. Binding of an allosteric activator is a prerequisiste to magnesium and substrate binding. Inhibited by inorganic phosphate. In terms of biological role, broad specificity cytosolic 5'-nucleotidase that catalyzes the dephosphorylation of 6-hydroxypurine nucleoside 5'-monophosphates. In addition, possesses a phosphotransferase activity by which it can transfer a phosphate from a donor nucleoside monophosphate to an acceptor nucleoside, preferably inosine, deoxyinosine and guanosine. Has the highest activities for IMP and GMP followed by dIMP, dGMP and XMP. Could also catalyze the transfer of phosphates from pyrimidine monophosphates but with lower efficiency. Through these activities regulates the purine nucleoside/nucleotide pools within the cell. In Bos taurus (Bovine), this protein is Cytosolic purine 5'-nucleotidase.